The chain runs to 541 residues: RING finger protein 37 (541 aa).

The region spanning 258-338 (DVPEEFLDPI…DHFLLQHSIP (81 aa)) is the U-box domain. R451 carries the post-translational modification Asymmetric dimethylarginine. The RING-type zinc-finger motif lies at 483–528 (CASCKRVFSPYFKKEPVYQLPCGHLLCRPCLGEKQRSLPMTCTACQ).

In terms of assembly, interacts with UBE2L3. Interacts with VCP. As to expression, expressed in liver, heart, brain, kidney and testis.

It localises to the nucleus. The enzyme catalyses S-ubiquitinyl-[E2 ubiquitin-conjugating enzyme]-L-cysteine + [acceptor protein]-L-lysine = [E2 ubiquitin-conjugating enzyme]-L-cysteine + N(6)-ubiquitinyl-[acceptor protein]-L-lysine.. It participates in protein modification; protein ubiquitination. May have a ubiquitin-protein ligase activity acting as an E3 ubiquitin-protein ligase or as a ubiquitin-ubiquitin ligase promoting elongation of ubiquitin chains on substrates. This is RING finger protein 37 from Homo sapiens (Human).